The following is a 261-amino-acid chain: Indole-3-glycerol phosphate synthase (261 aa).

The protein belongs to the TrpC family.

The catalysed reaction is 1-(2-carboxyphenylamino)-1-deoxy-D-ribulose 5-phosphate + H(+) = (1S,2R)-1-C-(indol-3-yl)glycerol 3-phosphate + CO2 + H2O. It participates in amino-acid biosynthesis; L-tryptophan biosynthesis; L-tryptophan from chorismate: step 4/5. The polypeptide is Indole-3-glycerol phosphate synthase (Alkaliphilus metalliredigens (strain QYMF)).